The chain runs to 462 residues: tRNA-2-methylthio-N(6)-dimethylallyladenosine synthase (462 aa).

The region spanning 28 to 144 is the MTTase N-terminal domain; it reads KKLFVKTYGC…LPKMMEAVNA (117 aa). [4Fe-4S] cluster is bound by residues cysteine 37, cysteine 73, cysteine 107, cysteine 181, cysteine 185, and cysteine 188. The Radical SAM core domain maps to 167-398; the sequence is ATRGPTAFLT…QALLTQQQRA (232 aa). Residues 401-462 enclose the TRAM domain; that stretch reads DAMVGRRVKV…KTNSLTGRLV (62 aa).

The protein belongs to the methylthiotransferase family. MiaB subfamily. As to quaternary structure, monomer. [4Fe-4S] cluster is required as a cofactor.

The protein resides in the cytoplasm. The enzyme catalyses N(6)-dimethylallyladenosine(37) in tRNA + (sulfur carrier)-SH + AH2 + 2 S-adenosyl-L-methionine = 2-methylsulfanyl-N(6)-dimethylallyladenosine(37) in tRNA + (sulfur carrier)-H + 5'-deoxyadenosine + L-methionine + A + S-adenosyl-L-homocysteine + 2 H(+). Functionally, catalyzes the methylthiolation of N6-(dimethylallyl)adenosine (i(6)A), leading to the formation of 2-methylthio-N6-(dimethylallyl)adenosine (ms(2)i(6)A) at position 37 in tRNAs that read codons beginning with uridine. The protein is tRNA-2-methylthio-N(6)-dimethylallyladenosine synthase of Jannaschia sp. (strain CCS1).